The chain runs to 868 residues: Translation initiation factor IF-2 (868 aa).

Residues 103-183 are compositionally biased toward basic and acidic residues; it reads RSELPETSDR…RQAAAERETV (81 aa). The interval 103–274 is disordered; sequence RSELPETSDR…GRPMLMPEQK (172 aa). A compositionally biased stretch (pro residues) spans 190-207; the sequence is VAAPPIPRPAPEPRPPAR. A compositionally biased stretch (basic and acidic residues) spans 213 to 254; it reads PKAEAPRAHPAERETEARGDKRSAGLSRKDEYRELQGDDFRK. Residues 255–264 are compositionally biased toward basic residues; that stretch reads GGGKRKKPKT. Residues 369–538 form the tr-type G domain; that stretch reads PRPPVVTIMG…LVQAEVLELK (170 aa). Residues 378–385 form a G1 region; the sequence is GHVDHGKT. 378–385 serves as a coordination point for GTP; sequence GHVDHGKT. The tract at residues 403 to 407 is G2; that stretch reads GITQH. The tract at residues 424–427 is G3; sequence DTPG. Residues 424–428 and 478–481 contribute to the GTP site; these read DTPGH and NKMD. The G4 stretch occupies residues 478-481; sequence NKMD. Residues 514 to 516 form a G5 region; the sequence is SAK.

The protein belongs to the TRAFAC class translation factor GTPase superfamily. Classic translation factor GTPase family. IF-2 subfamily.

Its subcellular location is the cytoplasm. One of the essential components for the initiation of protein synthesis. Protects formylmethionyl-tRNA from spontaneous hydrolysis and promotes its binding to the 30S ribosomal subunits. Also involved in the hydrolysis of GTP during the formation of the 70S ribosomal complex. This chain is Translation initiation factor IF-2, found in Methylococcus capsulatus (strain ATCC 33009 / NCIMB 11132 / Bath).